Here is a 948-residue protein sequence, read N- to C-terminus: UvrABC system protein A (948 aa).

33–40 (GLSGSGKS) provides a ligand contact to ATP. A C4-type zinc finger spans residues 252-279 (CPICGFSIGELEPRMFSFNSPFGACPTC). 2 ABC transporter domains span residues 309–587 (WIPT…KKSL) and 607–935 (ASDR…KYLK). 639–646 (GVSGSGKS) contacts ATP. Residues 738-764 (CEACKGDGIIKIEMHFLPDVYVPCEVC) form a C4-type zinc finger.

Belongs to the ABC transporter superfamily. UvrA family. Forms a heterotetramer with UvrB during the search for lesions.

The protein resides in the cytoplasm. Functionally, the UvrABC repair system catalyzes the recognition and processing of DNA lesions. UvrA is an ATPase and a DNA-binding protein. A damage recognition complex composed of 2 UvrA and 2 UvrB subunits scans DNA for abnormalities. When the presence of a lesion has been verified by UvrB, the UvrA molecules dissociate. This is UvrABC system protein A from Staphylococcus aureus (strain MRSA252).